A 148-amino-acid chain; its full sequence is Gametocyte-specific factor 1-like (148 aa).

2 CHHC U11-48K-type zinc fingers span residues 6 to 33 and 40 to 67; these read FEIC…RRKN and MATC…VNRS. 8 residues coordinate Zn(2+): C9, H15, H25, C29, C43, H49, H59, and C63. The disordered stretch occupies residues 67–99; sequence SAVEEEDTENPLKVSPPSSEQNDDTQQVSPCLP. Polar residues predominate over residues 82 to 95; sequence PPSSEQNDDTQQVS.

Belongs to the UPF0224 (FAM112) family.

In Homo sapiens (Human), this protein is Gametocyte-specific factor 1-like (GTSF1L).